We begin with the raw amino-acid sequence, 119 residues long: MNAVLSVQGASAPVKKKSFFSKFTRLNMLRLARAVIPAAVLMMFFPQLAMAAQGQDLMASGNTTVKATFGKDSSVVKWVVLAEVLVGAVMYMMTKNVKFLAGFAIISVFIAVGMAVVGL.

Positions 1 to 51 are excised as a propeptide; sequence MNAVLSVQGASAPVKKKSFFSKFTRLNMLRLARAVIPAAVLMMFFPQLAMA. Residues 1 to 73 are Periplasmic-facing; sequence MNAVLSVQGA…TVKATFGKDS (73 aa). Position 52 is an N-acetylalanine (alanine 52). A helical transmembrane segment spans residues 74 to 94; the sequence is SVVKWVVLAEVLVGAVMYMMT. Topologically, residues 95-98 are cytoplasmic; the sequence is KNVK. A helical transmembrane segment spans residues 99 to 119; it reads FLAGFAIISVFIAVGMAVVGL.

This sequence belongs to the TraA family. In terms of assembly, monomer. Interacts with itself to form filaments; also interacts with TraQ.

It localises to the cell inner membrane. Its subcellular location is the secreted. Propilin is the precursor of the pilus subunit, pilin, that forms conjugative pili, the filamentous surface appendages required for cell-to-cell contact during the earlier stages of bacterial conjugation, and that retract after contact is established. Mature pilin is assembled with the help of TraQ and TraX. The chain is Pilin (traA) from Escherichia coli.